Here is a 667-residue protein sequence, read N- to C-terminus: Receptor for retinol uptake STRA6 (667 aa).

Positions 1 to 13 are enriched in polar residues; the sequence is MSSQPAGNQTSPG. A disordered region spans residues 1–22; it reads MSSQPAGNQTSPGPTEDYSYGS. Residues 1–50 lie on the Extracellular side of the membrane; that stretch reads MSSQPAGNQTSPGPTEDYSYGSWYIDEPQGGEELQPEGEVPSCHTSIPPS. Asn-8 is a glycosylation site (N-linked (GlcNAc...) asparagine). Residues 51–71 traverse the membrane as a helical segment; the sequence is LYHACLASLSILVLLLLAMLV. Residues 72 to 98 are Cytoplasmic-facing; that stretch reads RRRQLWPDCVRGRPGLPSPVDFLAGDR. The helical transmembrane segment at 99–119 threads the bilayer; that stretch reads PQAVPAAVFVVLFSSLCLLLP. Residues 120–144 lie on the Extracellular side of the membrane; the sequence is DEDPLPFLTLASAPSQDGKTEAPRG. A helical membrane pass occupies residues 145–165; the sequence is AWKILGLFYYAALCYPLAACA. Residues 166–168 lie on the Cytoplasmic side of the membrane; the sequence is TAG. Residues 169–189 traverse the membrane as a helical segment; that stretch reads HTAAHLLGSTLSWAHLGVQVW. Residues 190-205 are Extracellular-facing; that stretch reads QRAECPQVPKIYKYYS. A helical transmembrane segment spans residues 206–226; sequence LLASLPLLLGLGFLSLWYPVQ. The Cytoplasmic segment spans residues 227–295; it reads LVRSFSCRTG…PQPGFRLPLK (69 aa). The interval 235–293 is interaction with RBP1; it reads TGAGSKGLQSSYSEEYLRNLLCRKKLGSSSHTSKHGFLSWAWVCLRHCIYTPQPGFRLP. A helical membrane pass occupies residues 296-316; sequence LVLSATLTGTAIYQVALLLLV. The Extracellular segment spans residues 317–367; it reads GMVPNIQKVRAGVTTDVSYLLAGFGIVLSEDKQEVVELVKHHLWALEVCYI. Residues 368–388 form a helical membrane-spanning segment; that stretch reads SALVLSCSLTFLVLMRSLVTH. The Cytoplasmic segment spans residues 389-422; that stretch reads RTNLRALHRGAALDSSPLHRSPHPSRRAIFCWMS. The helical transmembrane segment at 423 to 443 threads the bilayer; sequence FSAYQTAFICLGLLVQQIIFF. Over 444–473 the chain is Extracellular; it reads LGTTALAFLVLMPVLHGRNLLLFRSLESSW. A helical transmembrane segment spans residues 474–494; sequence PFWLTLALAVILQSMAAHWVF. Over 495–509 the chain is Cytoplasmic; that stretch reads LETHDGHPQLTNRRV. The segment at residues 510-547 is an intramembrane region (helical); sequence LYAATFLLFPLNVLVGAMVATWRVLLSALYNAIHLGQM. The Cytoplasmic segment spans residues 548–667; sequence DLSLLPPRAA…ALLGANGAQP (120 aa). The residue at position 643 (Tyr-643) is a Phosphotyrosine.

Homodimer. Interacts with JAK2 and STAT5. Interacts (via extracellular domains) with RBP4. Interacts (via cytoplasmic domains) with RBP1. Phosphorylated on tyrosine residues in response to RBP4 binding. Phosphorylation requires the presence of LRAT, suggesting it may be triggered by the uptake of retinol that is then metabolized within the cell to retinoids that function as signaling molecules.

It localises to the cell membrane. In terms of biological role, functions as a retinol transporter. Accepts all-trans retinol from the extracellular retinol-binding protein RBP4, facilitates retinol transport across the cell membrane, and then transfers retinol to the cytoplasmic retinol-binding protein RBP1. Retinol uptake is enhanced by LRAT, an enzyme that converts retinol to all-trans retinyl esters, the storage forms of vitamin A. Contributes to the activation of a signaling cascade that depends on retinol transport and LRAT-dependent generation of retinol metabolites that then trigger activation of JAK2 and its target STAT5, and ultimately increase the expression of SOCS3 and inhibit cellular responses to insulin. Important for the homeostasis of vitamin A and its derivatives, such as retinoic acid. STRA6-mediated transport is particularly important in the eye, and under conditions of dietary vitamin A deficiency. Does not transport retinoic acid. The polypeptide is Receptor for retinol uptake STRA6 (STRA6) (Pongo abelii (Sumatran orangutan)).